The primary structure comprises 369 residues: Peptide chain release factor 2 (369 aa).

Position 251 is an N5-methylglutamine (glutamine 251).

The protein belongs to the prokaryotic/mitochondrial release factor family. Post-translationally, methylated by PrmC. Methylation increases the termination efficiency of RF2.

It is found in the cytoplasm. Functionally, peptide chain release factor 2 directs the termination of translation in response to the peptide chain termination codons UGA and UAA. This is Peptide chain release factor 2 (prfB) from Chlamydia muridarum (strain MoPn / Nigg).